A 385-amino-acid chain; its full sequence is Chaperone protein DnaJ (385 aa).

Residues 5 to 70 (DYYEVLGVAK…QKRAAYDRYG (66 aa)) enclose the J domain. Residues 145-223 (GFDTEIRVPS…CDGVGRTRRN (79 aa)) form a CR-type zinc finger. Residues C158, C161, C175, C178, C197, C200, C211, and C214 each coordinate Zn(2+). 4 CXXCXGXG motif repeats span residues 158 to 165 (CDTCHGSG), 175 to 182 (CRTCGGSG), 197 to 204 (CPTCHGTG), and 211 to 218 (CPSCDGVG).

This sequence belongs to the DnaJ family. Homodimer. It depends on Zn(2+) as a cofactor.

It is found in the cytoplasm. In terms of biological role, participates actively in the response to hyperosmotic and heat shock by preventing the aggregation of stress-denatured proteins and by disaggregating proteins, also in an autonomous, DnaK-independent fashion. Unfolded proteins bind initially to DnaJ; upon interaction with the DnaJ-bound protein, DnaK hydrolyzes its bound ATP, resulting in the formation of a stable complex. GrpE releases ADP from DnaK; ATP binding to DnaK triggers the release of the substrate protein, thus completing the reaction cycle. Several rounds of ATP-dependent interactions between DnaJ, DnaK and GrpE are required for fully efficient folding. Also involved, together with DnaK and GrpE, in the DNA replication of plasmids through activation of initiation proteins. This chain is Chaperone protein DnaJ, found in Bordetella pertussis (strain Tohama I / ATCC BAA-589 / NCTC 13251).